The primary structure comprises 93 residues: Small ribosomal subunit protein uS19 (93 aa).

The protein belongs to the universal ribosomal protein uS19 family.

Functionally, protein S19 forms a complex with S13 that binds strongly to the 16S ribosomal RNA. This Micrococcus luteus (strain ATCC 4698 / DSM 20030 / JCM 1464 / CCM 169 / CCUG 5858 / IAM 1056 / NBRC 3333 / NCIMB 9278 / NCTC 2665 / VKM Ac-2230) (Micrococcus lysodeikticus) protein is Small ribosomal subunit protein uS19.